Consider the following 460-residue polypeptide: Argininosuccinate lyase (460 aa).

This sequence belongs to the lyase 1 family. Argininosuccinate lyase subfamily.

Its subcellular location is the cytoplasm. It catalyses the reaction 2-(N(omega)-L-arginino)succinate = fumarate + L-arginine. It participates in amino-acid biosynthesis; L-arginine biosynthesis; L-arginine from L-ornithine and carbamoyl phosphate: step 3/3. The protein is Argininosuccinate lyase of Buchnera aphidicola subsp. Cinara cedri (strain Cc).